The following is a 269-amino-acid chain: Mediator of RNA polymerase II transcription subunit 8 (269 aa).

The disordered stretch occupies residues 187 to 217 (RVLEDDDEEDESDSEEGEGEADEMEVVGARR). Residues 190–211 (EDDDEEDESDSEEGEGEADEME) show a composition bias toward acidic residues.

It belongs to the Mediator complex subunit 8 family. In terms of assembly, component of the Mediator complex.

It is found in the nucleus. Functionally, component of the Mediator complex, a coactivator involved in the regulated transcription of nearly all RNA polymerase II-dependent genes. Mediator functions as a bridge to convey information from gene-specific regulatory proteins to the basal RNA polymerase II transcription machinery. Mediator is recruited to promoters by direct interactions with regulatory proteins and serves as a scaffold for the assembly of a functional preinitiation complex with RNA polymerase II and the general transcription factors. The chain is Mediator of RNA polymerase II transcription subunit 8 (med8) from Aspergillus niger (strain ATCC MYA-4892 / CBS 513.88 / FGSC A1513).